The primary structure comprises 271 residues: Small ribosomal subunit protein uS2 (271 aa).

The tract at residues 235–271 is disordered; sequence FDAKNPLKPQNYNAPNKRPYQDSPRKPSYQNQNQNQI. Polar residues predominate over residues 262–271; sequence SYQNQNQNQI.

This sequence belongs to the universal ribosomal protein uS2 family.

The sequence is that of Small ribosomal subunit protein uS2 from Onion yellows phytoplasma (strain OY-M).